The following is a 232-amino-acid chain: Flagellar L-ring protein (232 aa).

The signal sequence occupies residues 1–15; sequence MKKVLFYVLPFAFFG. C16 carries the N-palmitoyl cysteine lipid modification. Residue C16 is the site of S-diacylglycerol cysteine attachment.

It belongs to the FlgH family. As to quaternary structure, the basal body constitutes a major portion of the flagellar organelle and consists of four rings (L,P,S, and M) mounted on a central rod.

It localises to the cell outer membrane. The protein resides in the bacterial flagellum basal body. Functionally, assembles around the rod to form the L-ring and probably protects the motor/basal body from shearing forces during rotation. The polypeptide is Flagellar L-ring protein (Campylobacter jejuni subsp. doylei (strain ATCC BAA-1458 / RM4099 / 269.97)).